The primary structure comprises 268 residues: Tryptophan synthase alpha chain (268 aa).

Active-site proton acceptor residues include glutamate 49 and aspartate 60.

The protein belongs to the TrpA family. As to quaternary structure, tetramer of two alpha and two beta chains.

The catalysed reaction is (1S,2R)-1-C-(indol-3-yl)glycerol 3-phosphate + L-serine = D-glyceraldehyde 3-phosphate + L-tryptophan + H2O. Its pathway is amino-acid biosynthesis; L-tryptophan biosynthesis; L-tryptophan from chorismate: step 5/5. In terms of biological role, the alpha subunit is responsible for the aldol cleavage of indoleglycerol phosphate to indole and glyceraldehyde 3-phosphate. The chain is Tryptophan synthase alpha chain from Haemophilus influenzae (strain 86-028NP).